Reading from the N-terminus, the 1403-residue chain is Eukaryotic translation initiation factor 4 gamma (1403 aa).

Polar residues-rich tracts occupy residues 1–11 (MSSKPPSNTPK), 19–39 (ASSQ…TATA), and 50–60 (EPTNTSRANAQ). 4 disordered regions span residues 1–381 (MSSK…GSTP), 439–464 (SRSG…RNGF), 488–774 (VVVP…KRDL), and 861–1003 (AFSD…EALL). At serine 83 the chain carries Phosphoserine. Residues 109-137 (DNTSKPSANSSAERTSSQHQKPETSSQIG) are compositionally biased toward polar residues. Composition is skewed to low complexity over residues 190-208 (SGVS…SVTS) and 231-248 (PRPT…ANGA). Positions 249–269 (PTNKPSTDINTTDPATQTTQV) are enriched in polar residues. The span at 270–291 (SASNSPALSGSSTPSNTSSRSN) shows a compositional bias: low complexity. Positions 298–308 (FSEKRHYDRYG) are enriched in basic and acidic residues. Residues 325–334 (NYNNSGNNRN) show a composition bias toward low complexity. Composition is skewed to polar residues over residues 346 to 381 (RNYN…GSTP), 439 to 460 (SRSG…TLSP), and 493 to 508 (KNAS…SRAE). Serine 452, serine 455, serine 456, and serine 459 each carry phosphoserine. Residues 537-714 (IQEKAEAEAK…GKREADKNPE (178 aa)) are compositionally biased toward basic and acidic residues. The span at 720–737 (PLASSEANVDTSKQTNAT) shows a compositional bias: polar residues. Basic and acidic residues predominate over residues 741-754 (VVDKTKVEKLKASE). Over residues 757-768 (STSSLSSPSHST) the composition is skewed to low complexity. Phosphoserine occurs at positions 866 and 882. Low complexity predominate over residues 868–886 (RGMYSSSRQSSRSGSNTHS). Position 884 is a phosphothreonine (threonine 884). Phosphoserine occurs at positions 886, 911, 919, and 921. Tyrosine 923 carries the phosphotyrosine modification. Residues 986–995 (KLTEKPAETK) show a composition bias toward basic and acidic residues. Positions 1009–1245 (QRKVKGSLNK…MDVMDSRKNG (237 aa)) constitute an MIF4G domain. The tract at residues 1266–1403 (AERKKALAES…QKDSNSKTSS (138 aa)) is disordered. The segment covering 1284–1295 (HGRDMNRGDSRM) has biased composition (basic and acidic residues). Polar residues-rich tracts occupy residues 1302 to 1313 (PPFSSSDWSNNK), 1328 to 1341 (SGTQ…SLSS), and 1348 to 1358 (VSRTPSRQNSA). Serine 1333 carries the phosphoserine modification. Positions 1383–1403 (LEEHDHDNDGGQKDSNSKTSS) are enriched in basic and acidic residues.

It belongs to the eukaryotic initiation factor 4G family.

Its subcellular location is the cytoplasm. It is found in the perinuclear region. In terms of biological role, component of the protein complex eIF4F, which is involved in the recognition of the mRNA cap, ATP-dependent unwinding of 5'-terminal secondary structure and recruitment of mRNA to the ribosome. This Schizosaccharomyces pombe (strain 972 / ATCC 24843) (Fission yeast) protein is Eukaryotic translation initiation factor 4 gamma (tif471).